A 1761-amino-acid chain; its full sequence is MTSTPATSLGDMDHEYNQDDIAIIGMACRLAGGIQSIEQFWNAILSKKDASGEIPEMRWEPYFRRDSRNAEILKKTTSRGYFLDRLENFDASFFGISPLEAELMDPQQRIALEVTWEALEHAGISVTSLAGSDTAVFMGVNSDDYSRLLLEDVPGVEAWMGIGTAFCGIPNRISYTLDLHGPSTAVDAACASGLVAVHHGRQALLAGESKLAIVGGVNALIGPGLTRVLDEAGAVTPEGRCRSFDDSASGYGRGEGASVLVLKRLSEAIIDGDKVLAVLKGSAVGQDGKTNGIMSPNQVAQEEVARKALSVARVDPLSVAFVEAHATSTPVGDPCEVAAIASVYGSGAGRPKDLPCKIGSVKPNVGHLEAGAGSTSLIKAVLAVSNGIFPPQANFQTPNRKMDWDNNSLEVIRGVSDWVQDRKRAGICSYGYGGTVAHAVIEQAPAPNFGPEDQVGDVVYADAAPYLLFWSAPQSQRLRETAAQLASWVGETEQPLADIANTLAYRRSQHQHRCAVVADNREEAVKLLELGSQNADSPWMIKEKVSNYGKKGAVWVFSGHGAHWTDMGKELLASEPAFYGAVSSIDNIVRDILNFSPLEALENGDLKTTDKQQVLTYAMQVGLSAVLRSKGAQPAAVIGHSVGEIAASVTAGCLTIQEGAFIVSQRAKLYRLVAGRGAMILVDLSPEDAVKELEEQGQTGAVAVAIHSSPNTCVLSGGIEAINELEQSLKDKHIQARRVKTDVAFHSPVLNELAEPLLELISGHIKPQQPKIRLYSTSLTQARGDNLRDEKYWIDNMIQPVLLTNAVKAALEDDFGIFLEVSSHPIIAHSINETIIEADSDGVIFPTLRRDKPSRKCILFALGKLHCHGAPIDLRANFSGDWTRDVPTTVWKHNPFWRKVGTGSLQPNKSVTHDVKSHVLLGAKHQVVGSDTTMWTTTLDESTRPFPGSHPLHGTEIVPAAVLLNTFLHTGEEYNALKDVILRVPVAMSAPRNIQIVKEQGRVRIVSRLQASEGENNNTESSWLTHTTGHVANNEWSKSSLDISATKKKLPSVKPSFATDYLASVGVPDMGFPWKVTEHYGEGDEMLSRVDTAPESSEKSIPWDVSSWAPILDAATSIGSSIFYKEPVLRMPAQIDEVAITPGSIPKVAYIHTTVETGMWRVNVAILNEEGHEVAHINGMRFSAVEGTPGASGSVESLVHQMSWPPAKLEEEGFQLKNVVFVSEQSDRVAAYIQDLQKRKVSTTVVPNPAGLEEQNLSSEGTIVAYLPSGSDLEEDTAKFSSTFCSEVLDIAKLLVNQKSPSKLWCITQGLFEAFSPSSLSQGPLVGLSRIIASEHPEVWGGLVDTDDESFPLQAVKYVKSVDVISVRDSVARVARLRPVPRSKIVTGREKTFTPTAEGTYLITGGLGALGLETAKWMVESGARRLILVSRRGLPPRRKWVDSNDDSAISTIRKLERLGASIHVVAADISKPDGAERLEQALDLLDLPSISGVVHAAGVLEDQLVAETTKESFDRVLAPKVSGAMALHQLFPPKTLEFFVLFSSCGQLLGFPGQASYASGNAFLDTFADFRRNQGDNIVSFLWTSWNGLGMASSTEYINAELEAKGITSVSRDEAFRAWEHAIKHDIHQAVVLRALPVEENGIPPLPILDEIAPRKRAESSGTEAVSKGEVSEKAPVPKSGPELKEYLQNAISECVAKTLRLPSAADVDPSTALTEMGMDSVMTVSLRKHLQTSLKVTVPPTLIWGHPTVNHLVKWFEEKI.

The Ketosynthase family 3 (KS3) domain occupies 18-443 (QDDIAIIGMA…GTVAHAVIEQ (426 aa)). Catalysis depends on for beta-ketoacyl synthase activity residues C190, H325, and H367. The segment at 554 to 870 (VWVFSGHGAH…ALGKLHCHGA (317 aa)) is malonyl-CoA:ACP transacylase (MAT) domain. The active-site For malonyltransferase activity is the S641. Positions 918-1038 (HVLLGAKHQV…GHVANNEWSK (121 aa)) are N-terminal hotdog fold. Residues 918-1187 (HVLLGAKHQV…NGMRFSAVEG (270 aa)) form a dehydratase (DH) domain region. Residues 918–1191 (HVLLGAKHQV…FSAVEGTPGA (274 aa)) enclose the PKS/mFAS DH domain. The active-site Proton acceptor; for dehydratase activity is the H950. Positions 1050-1191 (LPSVKPSFAT…FSAVEGTPGA (142 aa)) are C-terminal hotdog fold. The active-site Proton donor; for dehydratase activity is D1113. Positions 1399-1587 (GTYLITGGLG…IVSFLWTSWN (189 aa)) are ketoreductase (KR) domain. The segment at 1654-1680 (PRKRAESSGTEAVSKGEVSEKAPVPKS) is disordered. The 76-residue stretch at 1686-1761 (EYLQNAISEC…HLVKWFEEKI (76 aa)) folds into the Carrier domain. An O-(pantetheine 4'-phosphoryl)serine modification is found at S1721.

The catalysed reaction is 3 malonyl-CoA + acetyl-CoA + NADPH + 3 H(+) = 6-methylsalicylate + 3 CO2 + NADP(+) + 4 CoA + H2O. It functions in the pathway secondary metabolite biosynthesis; terpenoid biosynthesis. In terms of biological role, 6-methylsalicylic acid synthase; part of the gene cluster that mediates the biosynthesis of sesquiterpenyl epoxy-cyclohexenoids (SECs) such as anthrobotrisins and arthrosporols, metabolites that possess a novel hybrid carbon skeleton consisting of a polyketide-derived epoxycyclohexenol combined with a terpenoid-derived monocyclic sesquiterpenol substructure (PKS-PTS hybrid). The SEC pathway plays an important role for fungal soil colonization via decreasing fungal nematode-capturing ability. Within the pathway, the polyketide synthase (PKS) AOL_s00215g283 catalyzes the biosynthesis of 6-methylsalicylic acid (6-MSA) via condensation of 1 acetate and 3 malonate units. AOL_s00215g283 performs a series of programmed reactions including Claisen condensation, dehydration, reduction, and cyclization to yield 6-MSA. The pathway begins with the biosynthesis of 6-methylsalicylic acid (6-MSA), the first precursor of the polyketide-derived epoxycyclohexenol in arthrosporols, by the polyketide synthase (PKS) AOL_s00215g283. The 6-methylsalicylic acid decarboxylase AOL_s00215g281 then catalyzes the decarboxylation of 6-methylsalicylic acid to yield m-cresol. The cytochrome P450 monooxygenase AOL_s00215g282 further oxidizes m-cresol to yield toluquinol. With the assistance of the oxidoreductase AOL_s00215g277, the polyprenyl transferase AOL_s00215g276 catalyzes the farnesylation of toluquinol to produce farnesyl hydroquinone, the hybrid precursor for biosynthesis of SECs. Farnesyl hydroquinone undergoes epoxidation and then subsequent dehydrogenation to form farnesyl epoxy-quinone, the first and simplest SEC. The cytochrome P450 monooxygenase AOL_s00215g278 and the FAD-dependent monooxygenase AOL_s00215g279 might be involved in the oxygenation of the phenol moiety, most likely in the epoxy formation. The cytochrome P450 monooxygenases AOL_s00215g274 and AOL_s00215g280 are involved in specific regional ketone reductions at respectively C-4 and C-1 of farnesyl epoxy-quinone PubMed:33823587. The sequence is that of 6-methylsalicylic acid synthase AOL_s00215g283 from Arthrobotrys oligospora (strain ATCC 24927 / CBS 115.81 / DSM 1491) (Nematode-trapping fungus).